Consider the following 292-residue polypeptide: Acetyl-coenzyme A carboxylase carboxyl transferase subunit beta (292 aa).

The CoA carboxyltransferase N-terminal domain occupies 23-292 (VWSKCTACGN…TEATEVSVNE (270 aa)). Positions 27, 30, 46, and 49 each coordinate Zn(2+). The C4-type zinc finger occupies 27–49 (CTACGNIIYKADLERSLNVCPKC).

It belongs to the AccD/PCCB family. Acetyl-CoA carboxylase is a heterohexamer composed of biotin carboxyl carrier protein (AccB), biotin carboxylase (AccC) and two subunits each of ACCase subunit alpha (AccA) and ACCase subunit beta (AccD). It depends on Zn(2+) as a cofactor.

The protein resides in the cytoplasm. The catalysed reaction is N(6)-carboxybiotinyl-L-lysyl-[protein] + acetyl-CoA = N(6)-biotinyl-L-lysyl-[protein] + malonyl-CoA. Its pathway is lipid metabolism; malonyl-CoA biosynthesis; malonyl-CoA from acetyl-CoA: step 1/1. Its function is as follows. Component of the acetyl coenzyme A carboxylase (ACC) complex. Biotin carboxylase (BC) catalyzes the carboxylation of biotin on its carrier protein (BCCP) and then the CO(2) group is transferred by the transcarboxylase to acetyl-CoA to form malonyl-CoA. The protein is Acetyl-coenzyme A carboxylase carboxyl transferase subunit beta of Idiomarina loihiensis (strain ATCC BAA-735 / DSM 15497 / L2-TR).